The primary structure comprises 112 residues: MESKAIAKFQRVSPRKTRLVAKNVQGLGVEEAMNLLRFTPNKPAGVLYGVLKSALANASQLGGVDVDAMVVKEVVVNEGPTWKRFMPRAQGRATKINKRTSHITVILAEGQE.

Belongs to the universal ribosomal protein uL22 family. In terms of assembly, part of the 50S ribosomal subunit.

In terms of biological role, this protein binds specifically to 23S rRNA; its binding is stimulated by other ribosomal proteins, e.g. L4, L17, and L20. It is important during the early stages of 50S assembly. It makes multiple contacts with different domains of the 23S rRNA in the assembled 50S subunit and ribosome. The globular domain of the protein is located near the polypeptide exit tunnel on the outside of the subunit, while an extended beta-hairpin is found that lines the wall of the exit tunnel in the center of the 70S ribosome. This is Large ribosomal subunit protein uL22 from Desulfovibrio desulfuricans (strain ATCC 27774 / DSM 6949 / MB).